A 317-amino-acid chain; its full sequence is Melanocyte-stimulating hormone receptor (317 aa).

Over 1-37 the chain is Extracellular; the sequence is MPVQGSQRRLLGSLNSTPTATPHLGLAANQTGARCLE. N-linked (GlcNAc...) asparagine glycosylation is present at Asn29. A helical membrane pass occupies residues 38–63; sequence VSIPDGLFLSLGLVSLVENVLVVTAI. The Cytoplasmic segment spans residues 64 to 72; it reads AKNRNLHSP. The chain crosses the membrane as a helical span at residues 73-93; the sequence is MYCFICCLALSDLLVSGSNML. Over 94–118 the chain is Extracellular; sequence ETAVILLLEAGALAARAAVVQQLDN. The chain crosses the membrane as a helical span at residues 119–140; that stretch reads VIDVITCSSMLSSLCFLGAIAV. The Cytoplasmic segment spans residues 141 to 163; that stretch reads DRYISIFYALRYHSIVTLPRARR. A helical transmembrane segment spans residues 164-183; it reads AVAAIWVASVLFSMLFIAYY. Topologically, residues 184–191 are extracellular; sequence DHAAVLLC. Residues 192–211 form a helical membrane-spanning segment; sequence LVVFFLAMLVLMAVLYVHML. The Cytoplasmic segment spans residues 212–240; the sequence is ARACQHAQGIARLHKRQCPAHQGFGLKGA. The chain crosses the membrane as a helical span at residues 241 to 266; it reads ATLTILLGIFFLCWGPFFLHLTLIVL. At 267 to 279 the chain is on the extracellular side; that stretch reads CPQHPTCSCIFKN. The helical transmembrane segment at 280-300 threads the bilayer; the sequence is FNLFLALIICNAIIDPLIYAF. Over 301 to 317 the chain is Cytoplasmic; it reads RSQELRRTLKEVLLCSW. A lipid anchor (S-palmitoyl cysteine) is attached at Cys315.

This sequence belongs to the G-protein coupled receptor 1 family. In terms of assembly, interacts with MGRN1, but does not undergo MGRN1-mediated ubiquitination; this interaction competes with GNAS-binding and thus inhibits agonist-induced cAMP production. Interacts with OPN3; the interaction results in a decrease in MC1R-mediated cAMP signaling and ultimately a decrease in melanin production in melanocytes.

The protein localises to the cell membrane. Receptor for MSH (alpha, beta and gamma) and ACTH. The activity of this receptor is mediated by G proteins which activate adenylate cyclase. Mediates melanogenesis, the production of eumelanin (black/brown) and phaeomelanin (red/yellow), via regulation of cAMP signaling in melanocytes. The chain is Melanocyte-stimulating hormone receptor (MC1R) from Chlorocebus aethiops (Green monkey).